A 296-amino-acid polypeptide reads, in one-letter code: Lipoyl synthase (296 aa).

[4Fe-4S] cluster contacts are provided by cysteine 37, cysteine 42, cysteine 48, cysteine 63, cysteine 67, cysteine 70, and serine 276. The 217-residue stretch at 49–265 (WSKKHTTVMI…ERVAKTKGFL (217 aa)) folds into the Radical SAM core domain.

This sequence belongs to the radical SAM superfamily. Lipoyl synthase family. It depends on [4Fe-4S] cluster as a cofactor.

The protein localises to the cytoplasm. The catalysed reaction is [[Fe-S] cluster scaffold protein carrying a second [4Fe-4S](2+) cluster] + N(6)-octanoyl-L-lysyl-[protein] + 2 oxidized [2Fe-2S]-[ferredoxin] + 2 S-adenosyl-L-methionine + 4 H(+) = [[Fe-S] cluster scaffold protein] + N(6)-[(R)-dihydrolipoyl]-L-lysyl-[protein] + 4 Fe(3+) + 2 hydrogen sulfide + 2 5'-deoxyadenosine + 2 L-methionine + 2 reduced [2Fe-2S]-[ferredoxin]. The protein operates within protein modification; protein lipoylation via endogenous pathway; protein N(6)-(lipoyl)lysine from octanoyl-[acyl-carrier-protein]: step 2/2. Functionally, catalyzes the radical-mediated insertion of two sulfur atoms into the C-6 and C-8 positions of the octanoyl moiety bound to the lipoyl domains of lipoate-dependent enzymes, thereby converting the octanoylated domains into lipoylated derivatives. The protein is Lipoyl synthase of Rickettsia massiliae (strain Mtu5).